Here is a 153-residue protein sequence, read N- to C-terminus: Large ribosomal subunit protein uL13 (153 aa).

Belongs to the universal ribosomal protein uL13 family. Part of the 50S ribosomal subunit.

Its function is as follows. This protein is one of the early assembly proteins of the 50S ribosomal subunit, although it is not seen to bind rRNA by itself. It is important during the early stages of 50S assembly. The polypeptide is Large ribosomal subunit protein uL13 (Methylobacterium nodulans (strain LMG 21967 / CNCM I-2342 / ORS 2060)).